The primary structure comprises 189 residues: Elongation factor P (189 aa).

At lysine 34 the chain carries N6-(3,6-diaminohexanoyl)-5-hydroxylysine.

Belongs to the elongation factor P family. In terms of processing, may be beta-lysylated on the epsilon-amino group of Lys-34 by the combined action of EpmA and EpmB, and then hydroxylated on the C5 position of the same residue by EpmC (if this protein is present). Lysylation is critical for the stimulatory effect of EF-P on peptide-bond formation. The lysylation moiety may extend toward the peptidyltransferase center and stabilize the terminal 3-CCA end of the tRNA. Hydroxylation of the C5 position on Lys-34 may allow additional potential stabilizing hydrogen-bond interactions with the P-tRNA.

The protein resides in the cytoplasm. It participates in protein biosynthesis; polypeptide chain elongation. Its function is as follows. Involved in peptide bond synthesis. Alleviates ribosome stalling that occurs when 3 or more consecutive Pro residues or the sequence PPG is present in a protein, possibly by augmenting the peptidyl transferase activity of the ribosome. Modification of Lys-34 is required for alleviation. This chain is Elongation factor P, found in Halorhodospira halophila (strain DSM 244 / SL1) (Ectothiorhodospira halophila (strain DSM 244 / SL1)).